The sequence spans 87 residues: Small ribosomal subunit protein bS20 (87 aa).

The tract at residues 1 to 26 is disordered; sequence MANIKSAQKRAVQSEKRRQHNASQRS.

The protein belongs to the bacterial ribosomal protein bS20 family.

Functionally, binds directly to 16S ribosomal RNA. The polypeptide is Small ribosomal subunit protein bS20 (Glaesserella parasuis serovar 5 (strain SH0165) (Haemophilus parasuis)).